We begin with the raw amino-acid sequence, 263 residues long: Versicolorin reductase 1 (263 aa).

NADP(+)-binding residues include Ile22, Asp68, Asn95, and Arg128. Active-site proton donor residues include Ser144 and Ser145. NADP(+) is bound by residues Tyr159, Lys163, Ile192, and Thr194. Tyr159 serves as the catalytic Proton acceptor. Lys163 functions as the Lowers pKa of active site Tyr in the catalytic mechanism.

This sequence belongs to the short-chain dehydrogenases/reductases (SDR) family.

It localises to the cytoplasm. The protein resides in the cytosol. It participates in mycotoxin biosynthesis. Functionally, versicolorin reductase; part of the fragmented gene cluster that mediates the biosynthesis of dothistromin (DOTH), a polyketide toxin very similar in structure to the aflatoxin precursor, versicolorin B. The first step of the pathway is the conversion of acetate to norsolorinic acid (NOR) and requires the fatty acid synthase subunits hexA and hexB, as well as the polyketide synthase pksA. PksA combines a hexanoyl starter unit and 7 malonyl-CoA extender units to synthesize the precursor NOR. The hexanoyl starter unit is provided to the acyl-carrier protein (ACP) domain by the fungal fatty acid synthase hexA/hexB. The second step is the conversion of NOR to averantin (AVN) and requires the norsolorinic acid ketoreductase nor1, which catalyzes the dehydration of norsolorinic acid to form (1'S)-averantin. The cytochrome P450 monooxygenase avnA then catalyzes the hydroxylation of AVN to 5'hydroxyaverantin (HAVN). The next step is performed by adhA that transforms HAVN to averufin (AVF). Averufin might then be converted to hydroxyversicolorone by cypX and avfA. Hydroxyversicolorone is further converted versiconal hemiacetal acetate (VHA) by moxY. VHA is then the substrate for the versiconal hemiacetal acetate esterase est1 to yield versiconal (VAL). Versicolorin B synthase vbsA then converts VAL to versicolorin B (VERB) by closing the bisfuran ring. Then, the activity of the versicolorin B desaturase verB leads to versicolorin A (VERA). DotB, a predicted chloroperoxidase, may perform epoxidation of the A-ring of VERA. Alternatively, a cytochrome P450, such as cypX or avnA could catalyze this step. It is also possible that another, uncharacterized, cytochrome P450 enzyme is responsible for this step. Opening of the epoxide could potentially be achieved by the epoxide hydrolase epoA. However, epoA seems not to be required for DOTH biosynthesis, but other epoxide hydrolases may have the ability to complement this hydrolysis. Alternatively, opening of the epoxide ring could be achieved non-enzymatically. The next step is the deoxygenation of ring A to yield the 5,8-dihydroxyanthraquinone which is most likely catalyzed by the NADPH dehydrogenase encoded by ver1. The last stages of DOTH biosynthesis are proposed to involve hydroxylation of the bisfuran. OrdB and norB might have oxidative roles here. An alternative possibility is that cytochrome P450 monoogenases such as avnA and cypX might perform these steps in addition to previously proposed steps. This Dothistroma septosporum (Red band needle blight fungus) protein is Versicolorin reductase 1.